The chain runs to 166 residues: PTS system glucose-specific EIIA component (166 aa).

Residues 34-138 (DPVFAQKMMG…SVISPIIITN (105 aa)) form the PTS EIIA type-1 domain. His-71 and His-86 together coordinate Zn(2+). The active-site Tele-phosphohistidine intermediate; for EIIA activity is the His-86. Position 86 is a phosphohistidine; by HPr (His-86).

Heterodimer with glycerol kinase (glpk). Requires Zn(2+) as cofactor.

The protein localises to the cytoplasm. In terms of biological role, the phosphoenolpyruvate-dependent sugar phosphotransferase system (sugar PTS), a major carbohydrate active transport system, catalyzes the phosphorylation of incoming sugar substrates concomitantly with their translocation across the cell membrane. The enzyme II complex composed of PtsG and Crr is involved in glucose transport. This Staphylococcus aureus (strain MSSA476) protein is PTS system glucose-specific EIIA component (crr).